Consider the following 57-residue polypeptide: Large ribosomal subunit protein bL32 (57 aa).

Residues 1–21 (MAVPKRRTSKKVKNQRRTHKK) are disordered.

Belongs to the bacterial ribosomal protein bL32 family.

In Oceanobacillus iheyensis (strain DSM 14371 / CIP 107618 / JCM 11309 / KCTC 3954 / HTE831), this protein is Large ribosomal subunit protein bL32.